The following is a 744-amino-acid chain: Catalase A (744 aa).

Residues His93 and Asn166 contribute to the active site. Tyr380 contributes to the heme binding site.

Belongs to the catalase family. Heme serves as cofactor.

The protein localises to the peroxisome matrix. It carries out the reaction 2 H2O2 = O2 + 2 H2O. Functionally, catalyzes the degradation of hydrogen peroxide (H(2)O(2)) generated by peroxisomal oxidases to water and oxygen, thereby protecting cells from the toxic effects of hydrogen peroxide. The polypeptide is Catalase A (catA) (Emericella nidulans (strain FGSC A4 / ATCC 38163 / CBS 112.46 / NRRL 194 / M139) (Aspergillus nidulans)).